The sequence spans 726 residues: Sensory/regulatory protein RpfC (726 aa).

The next 5 membrane-spanning stretches (helical) occupy residues 23–40 (NLIR…LGWR), 52–72 (TWLI…AILL), 95–115 (IMAI…WVTI), 128–148 (AATA…PYWK), and 152–172 (YLSW…DSLL). In terms of domain architecture, Histidine kinase spans 195–417 (NMSHEFRTPL…VFWFELPMAI (223 aa)). His198 carries the post-translational modification Phosphohistidine; by autocatalysis. Positions 463–581 (RMLVADDHEA…KLLDTLADLA (119 aa)) constitute a Response regulatory domain. Residue Asp512 is modified to 4-aspartylphosphate. The 94-residue stretch at 618–711 (GEEFERQFVR…KAGKDALDAR (94 aa)) folds into the HPt domain. The residue at position 657 (His657) is a Phosphohistidine.

In terms of assembly, at low DSF concentrations, interacts with RpfF. In terms of processing, autophosphorylated. Activation may require a sequential transfer of a phosphate group from a His in the primary transmitter domain, to an Asp in the receiver domain and to a His in the secondary transmitter domain.

The protein resides in the cell inner membrane. It carries out the reaction ATP + protein L-histidine = ADP + protein N-phospho-L-histidine.. Binding of DSF to the sensor region causes allosteric change, which facilitates RpfC autophosphorylation. Its function is as follows. Hybrid sensor kinase that regulates diverse biological functions through two distinct molecular mechanisms. At low cell density, the extracellular concentration of the diffusible signaling factor (DSF) is below a threshold, and unphosphorylated RpfC is involved in the negative regulation of DSF synthesis, via direct interaction with the DSF synthase RpfF. Interaction prevents synthesis of DSF, which remains at a basal level. This activity does not involve the phosphorelay mechanism and is not dependent on RpfG. Is also member of the two-component regulatory system RpfG/RpfC, which is involved in the perception and response to DSF, which is essential for cell-cell signaling. At high cell density, the level of extracellular DSF increases and binding of DSF to the sensor region of RpfC causes autophosphorylation of RpfC, which results in the release of RpfF and the activation of RpfG via a four-step phosphorelay. Activation of RpfG leads to the positive regulation of biofilm dispersal and the production of virulence factors. This Xanthomonas campestris pv. campestris (strain ATCC 33913 / DSM 3586 / NCPPB 528 / LMG 568 / P 25) protein is Sensory/regulatory protein RpfC (rpfC).